A 487-amino-acid chain; its full sequence is MKLYTKTAHELHDLLVRKEVSATEIVKTQADRMQALEPKIRAFVTLTVDKALEQAARVDAKIAAGEAIGPLEGIPMAIKDNMCTDGVRTTCSSKILNNFVPPYDATVVTKLKEAGAVMMGKTNLDEFAMGSSTENSGFFATCNPWDIERVPGGSSGGSAASVAAGQAVFSLGSDTGGSIRQPAAFCGVVGLKPTYGAVSRFGLIAFASSLDQIGPFTRDVRDCAHVMNAIAGHDAKDSTSAPVDYPDYTSLLGKPIKGWRVGLPKEYFGDGMDPEVKEVIEKAVKTIEDLGAEVAECSLPHTEYALPVYYLIAPAEASSNLARYDGVRYGYRSESADDLITMFKKTRAEGFGDEVKRRIMLGTYALSSGYYDAYYLKALKVRTLIKNDFDQAFEKFDVILSPTTPTVAFKFGDRTDNPLQMYLSDIYTLSVNLAGIPGLSINAGFAKGMPVGLQIIGKPFDEARLLQIAYAYEEATGCHSKMPDLGV.

Residues Lys-79 and Ser-154 each act as charge relay system in the active site. Ser-178 acts as the Acyl-ester intermediate in catalysis.

The protein belongs to the amidase family. GatA subfamily. In terms of assembly, heterotrimer of A, B and C subunits.

The catalysed reaction is L-glutamyl-tRNA(Gln) + L-glutamine + ATP + H2O = L-glutaminyl-tRNA(Gln) + L-glutamate + ADP + phosphate + H(+). Functionally, allows the formation of correctly charged Gln-tRNA(Gln) through the transamidation of misacylated Glu-tRNA(Gln) in organisms which lack glutaminyl-tRNA synthetase. The reaction takes place in the presence of glutamine and ATP through an activated gamma-phospho-Glu-tRNA(Gln). The protein is Glutamyl-tRNA(Gln) amidotransferase subunit A of Heliobacterium modesticaldum (strain ATCC 51547 / Ice1).